The following is a 127-amino-acid chain: Small ribosomal subunit protein bS6 (127 aa).

A disordered region spans residues 96 to 127 (VTTPSPMMKEEKSRSLTPAAGDEGKPAEAAEA). Residues 117-127 (DEGKPAEAAEA) show a composition bias toward basic and acidic residues.

Belongs to the bacterial ribosomal protein bS6 family.

In terms of biological role, binds together with bS18 to 16S ribosomal RNA. This chain is Small ribosomal subunit protein bS6, found in Azoarcus sp. (strain BH72).